Reading from the N-terminus, the 175-residue chain is Shikimate kinase (175 aa).

11–16 (GAGKTT) contacts ATP. Residue threonine 15 coordinates Mg(2+). Substrate is bound by residues aspartate 33, arginine 57, and glycine 79. Arginine 118 contacts ATP. Arginine 140 is a binding site for substrate.

This sequence belongs to the shikimate kinase family. Monomer. Requires Mg(2+) as cofactor.

The protein localises to the cytoplasm. The enzyme catalyses shikimate + ATP = 3-phosphoshikimate + ADP + H(+). It participates in metabolic intermediate biosynthesis; chorismate biosynthesis; chorismate from D-erythrose 4-phosphate and phosphoenolpyruvate: step 5/7. Functionally, catalyzes the specific phosphorylation of the 3-hydroxyl group of shikimic acid using ATP as a cosubstrate. The polypeptide is Shikimate kinase (Phocaeicola vulgatus (strain ATCC 8482 / DSM 1447 / JCM 5826 / CCUG 4940 / NBRC 14291 / NCTC 11154) (Bacteroides vulgatus)).